The following is a 569-amino-acid chain: Aspartate--tRNA ligase, cytoplasmic 2 (569 aa).

The tract at residues 1 to 23 (MSEENNHKEKSKNEIKKEKKKIE) is disordered. Residues 292-295 (QFYR) form an aspartate region. R314 provides a ligand contact to L-aspartate. ATP contacts are provided by residues 314–316 (RTD) and 322–324 (RHL). L-aspartate is bound by residues S475 and R479. Residue 540–543 (GLER) participates in ATP binding.

This sequence belongs to the class-II aminoacyl-tRNA synthetase family. Type 2 subfamily.

It is found in the cytoplasm. The enzyme catalyses tRNA(Asp) + L-aspartate + ATP = L-aspartyl-tRNA(Asp) + AMP + diphosphate. The polypeptide is Aspartate--tRNA ligase, cytoplasmic 2 (aspS2) (Dictyostelium discoideum (Social amoeba)).